We begin with the raw amino-acid sequence, 280 residues long: Pantothenate synthetase (280 aa).

Position 30-37 (30-37 (MGYLHEGH)) interacts with ATP. Residue His37 is the Proton donor of the active site. Residue Gln61 coordinates (R)-pantoate. Beta-alanine is bound at residue Gln61. 147 to 150 (GQKD) lines the ATP pocket. A (R)-pantoate-binding site is contributed by Gln153. Residues Val176 and 184 to 187 (MSSR) each bind ATP.

The protein belongs to the pantothenate synthetase family. Homodimer.

The protein localises to the cytoplasm. The catalysed reaction is (R)-pantoate + beta-alanine + ATP = (R)-pantothenate + AMP + diphosphate + H(+). It participates in cofactor biosynthesis; (R)-pantothenate biosynthesis; (R)-pantothenate from (R)-pantoate and beta-alanine: step 1/1. In terms of biological role, catalyzes the condensation of pantoate with beta-alanine in an ATP-dependent reaction via a pantoyl-adenylate intermediate. The polypeptide is Pantothenate synthetase (Fervidobacterium nodosum (strain ATCC 35602 / DSM 5306 / Rt17-B1)).